We begin with the raw amino-acid sequence, 135 residues long: UPF0299 membrane protein Spro_1570 (135 aa).

Helical transmembrane passes span 4–24, 30–50, 63–83, and 93–113; these read LFTLCWKYLRAIVLIYLCLFA, ALLPIAIPGSIIGMLLLFALL, GCHLLIRYMVLLFVPIGVGVM, and LGPLVVSCIISTLMVLVVVGY.

It belongs to the UPF0299 family.

It is found in the cell inner membrane. This is UPF0299 membrane protein Spro_1570 from Serratia proteamaculans (strain 568).